The sequence spans 959 residues: AP2-associated protein kinase 1 (959 aa).

N-acetylmethionine is present on M1. Residues 1 to 11 (MKKFFDSRREQ) are compositionally biased toward basic and acidic residues. The disordered stretch occupies residues 1–27 (MKKFFDSRREQGSSGLGSGSSGGGGSS). S14 is subject to Phosphoserine. Positions 14 to 27 (SGLGSGSSGGGGSS) are enriched in gly residues. The Protein kinase domain occupies 46–315 (VTVDEVLAEG…QVSYFSFKLL (270 aa)). Residues 52–60 (LAEGGFALV) and K74 contribute to the ATP site. Catalysis depends on D176, which acts as the Proton acceptor. Y234 is modified (phosphotyrosine). S235 carries the phosphoserine modification. The disordered stretch occupies residues 340-385 (SEAAVKKTQPKARLTDPIPTTETSIAPRQRPKAGQTQPNPGILPIQ). Phosphothreonine occurs at positions 354 and 389. Omega-N-methylarginine is present on R391. 2 disordered regions span residues 398-514 (PLPQ…AVHP) and 578-630 (TAPQ…RAGH). Polar residues predominate over residues 404–419 (GPSNQPGLLPSVSQPK). Over residues 420 to 435 (AQATPSQPLQSSQPKQ) the composition is skewed to low complexity. T441 is subject to Phosphothreonine. Composition is skewed to low complexity over residues 444–481 (QTPA…QPQQ), 494–510 (QQQQ…QQFQ), and 578–603 (TAPQ…KVQT). Phosphothreonine is present on T604. The segment covering 609–625 (IQGQKVGSLTPPSSPKT) has biased composition (polar residues). Position 616 is a phosphoserine (S616). At T618 the chain carries Phosphothreonine. S621, S622, S635, and S648 each carry phosphoserine. A Phosphothreonine modification is found at T651. Disordered regions lie at residues 662–699 (SLNK…FDDD), 727–763 (GGSA…GGQA), 837–857 (PVAQ…TDSL), and 923–943 (ITKN…ESSL). Polar residues predominate over residues 670–694 (TTTPSGSPRTSQQNVSNASEGSTWN). A Phosphoserine modification is found at S729. Polar residues-rich tracts occupy residues 738–752 (QPTQ…SFSA) and 842–857 (LPSQ…TDSL). The tract at residues 821-958 (DKADVAVESL…SLLLVDQLID (138 aa)) is clathrin-binding domain (CBD). Phosphoserine is present on residues S844, S935, and S936. Residues 929–942 (GGHSRNSSGSSESS) show a composition bias toward low complexity.

Belongs to the protein kinase superfamily. Ser/Thr protein kinase family. In terms of assembly, interacts (via CBD domain) with clathrin. Interacts with AP-2 complex. Interacts with NUMB. Interacts with alpha-adaptin. Interacts with EPS15 isoform 2. Interacts with membrane-bound activated NOTCH1 but not with the inactive full-length form of NOTCH1. Preferentially interacts with monoubiquitinated activated NOTCH1 compared to the non-ubiquitinated form. Post-translationally, autophosphorylated.

It localises to the cell membrane. It is found in the membrane. Its subcellular location is the clathrin-coated pit. The protein resides in the presynapse. The enzyme catalyses L-seryl-[protein] + ATP = O-phospho-L-seryl-[protein] + ADP + H(+). It catalyses the reaction L-threonyl-[protein] + ATP = O-phospho-L-threonyl-[protein] + ADP + H(+). Its activity is regulated as follows. Stimulated by clathrin. Its function is as follows. Regulates clathrin-mediated endocytosis by phosphorylating the AP2M1/mu2 subunit of the adaptor protein complex 2 (AP-2) which ensures high affinity binding of AP-2 to cargo membrane proteins during the initial stages of endocytosis. Preferentially, may phosphorylate substrates on threonine residues. Regulates phosphorylation of other AP-2 subunits as well as AP-2 localization and AP-2-mediated internalization of ligand complexes. Phosphorylates NUMB and regulates its cellular localization, promoting NUMB localization to endosomes. Binds to and stabilizes the activated form of NOTCH1, increases its localization in endosomes and regulates its transcriptional activity. This Mus musculus (Mouse) protein is AP2-associated protein kinase 1 (Aak1).